Here is a 213-residue protein sequence, read N- to C-terminus: N-(5'-phosphoribosyl)anthranilate isomerase (213 aa).

This sequence belongs to the TrpF family.

The enzyme catalyses N-(5-phospho-beta-D-ribosyl)anthranilate = 1-(2-carboxyphenylamino)-1-deoxy-D-ribulose 5-phosphate. The protein operates within amino-acid biosynthesis; L-tryptophan biosynthesis; L-tryptophan from chorismate: step 3/5. The chain is N-(5'-phosphoribosyl)anthranilate isomerase from Leptospira interrogans serogroup Icterohaemorrhagiae serovar copenhageni (strain Fiocruz L1-130).